Here is an 828-residue protein sequence, read N- to C-terminus: Auxin response factor 2B (828 aa).

Residues 128-230 constitute a DNA-binding region (TF-B3); the sequence is FCKTLTASDT…ELRVGVRRAM (103 aa). 3 disordered regions span residues 348–397, 681–703, and 791–828; these read PDRV…GSSK, EQFQTSHPGTRDREGKGLVHSTR, and NPGTLNSKGEDNSSVAEGSDAKEVKNLQLHIDSSPEDS. The segment covering 360-370 has biased composition (pro residues); sequence LSPPALNPLPI. Positions 380–390 are enriched in polar residues; the sequence is VLPSSPDSSVL. The 84-residue stretch at 703 to 786 folds into the PB1 domain; that stretch reads RSCTKVHKQG…RKIFIYTKDE (84 aa). Residues 791-806 show a composition bias toward polar residues; the sequence is NPGTLNSKGEDNSSVA.

This sequence belongs to the ARF family. Homodimers and heterodimers. As to expression, expressed in root, leaf and stem. Also expressed in flower and fruit. Expressed in flower buds about three days before opening including stamen, petal and sepal with the highest in ovary.

The protein localises to the nucleus. Auxin response factors (ARFs) are transcriptional factors that binds specifically to the DNA sequence 5'-TGTCTC-3' found in the auxin-responsive promoter elements (AuxREs). Could act as transcriptional activator or repressor. Involved in the control of fruit ripening process. Regulates expression of a number of ripening regulators, transcription factors, and ethylene biosynthesis and signaling components. May act as a transcriptional repressor of auxin-responsive genes. The chain is Auxin response factor 2B from Solanum lycopersicum (Tomato).